Here is a 480-residue protein sequence, read N- to C-terminus: NADH-quinone oxidoreductase subunit N (480 aa).

The next 13 membrane-spanning stretches (helical) occupy residues 11–31 (VIPE…DLFV), 38–58 (ITYG…IALA), 74–94 (GLSD…FLYS), 109–129 (YVLG…YSFL), 163–183 (FILG…LYGI), 200–220 (GAGL…GLAF), 239–259 (PTSV…AIIM), 273–293 (WQGM…VVAI), 301–321 (MLAY…LAGT), 329–349 (LFYT…IILL), 372–392 (FAFI…TVGF), 405–425 (VEMI…AFYY), and 451–471 (VVLS…GLLM).

The protein belongs to the complex I subunit 2 family. In terms of assembly, NDH-1 is composed of 14 different subunits. Subunits NuoA, H, J, K, L, M, N constitute the membrane sector of the complex.

Its subcellular location is the cell inner membrane. The enzyme catalyses a quinone + NADH + 5 H(+)(in) = a quinol + NAD(+) + 4 H(+)(out). Functionally, NDH-1 shuttles electrons from NADH, via FMN and iron-sulfur (Fe-S) centers, to quinones in the respiratory chain. The immediate electron acceptor for the enzyme in this species is believed to be ubiquinone. Couples the redox reaction to proton translocation (for every two electrons transferred, four hydrogen ions are translocated across the cytoplasmic membrane), and thus conserves the redox energy in a proton gradient. The sequence is that of NADH-quinone oxidoreductase subunit N from Thioalkalivibrio sulfidiphilus (strain HL-EbGR7).